A 342-amino-acid polypeptide reads, in one-letter code: UV excision repair protein RAD23 homolog (342 aa).

One can recognise a Ubiquitin-like domain in the interval Met1 to Glu76. A compositionally biased stretch (low complexity) spans Ala77–Pro151. Positions Ala77–Phe157 are disordered. UBA domains follow at residues Thr161 to Gly201 and Gln297 to Thr338.

It belongs to the RAD23 family.

The protein resides in the nucleus. It localises to the cytoplasm. In terms of biological role, may play a role both in proteasomal degradation of misfolded proteins and DNA repair. This Dictyostelium discoideum (Social amoeba) protein is UV excision repair protein RAD23 homolog (rcbA).